The following is a 3933-amino-acid chain: Protein DOP1 homolog PFC0245c (3933 aa).

4 helical membrane passes run 70-90 (LNPLLPSGVHSKALIIYSSIF), 98-118 (FINNIHILCSGIFEFMLHCTI), 140-160 (IFAYALLLSLFNVVDSDNNIL), and 163-183 (IYSINNYIGENIFFNNIWLLL). 3 disordered regions span residues 468-494 (RLNNNNNNNNNNNNNNNNNGDNLKYQG), 543-600 (ININ…NMLH), and 614-656 (KKIN…SSSS). Residues 470 to 486 (NNNNNNNNNNNNNNNNN) are compositionally biased toward low complexity. A compositionally biased stretch (acidic residues) spans 546 to 561 (NDDDNLNYDDNEDDEY). Composition is skewed to low complexity over residues 563–576 (NYHNNNYNDRNYFN) and 585–597 (ENNNNNNHSNNNN). The stretch at 620 to 651 (GQTNNYDDDEEEEDEEEEDNNNNTSYNNNNNN) forms a coiled coil. Acidic residues predominate over residues 625 to 639 (YDDDEEEEDEEEEDN). Positions 640-656 (NNNTSYNNNNNNSSSSS) are enriched in low complexity. 3 helical membrane-spanning segments follow: residues 782-802 (MLNLNLISYENILNIFLYTFY), 842-862 (YLYIQFLFHFNLATLKLMNFL), and 1186-1206 (FYFWCFLFLHIIRINFNKSLL). Residues 1216 to 1255 (DDTDDDDDDDDDDDDEEEDDDDEDDDDEDDEEEDDEEDLG) are compositionally biased toward acidic residues. 2 disordered regions span residues 1216–1284 (DDTD…MNKK) and 1361–1405 (TNNN…NNFN). The span at 1263–1284 (SSKKGKKKKKKSVHKNKLMNKK) shows a compositional bias: basic residues. Residues 1349–1403 (ELNKMKYMNEDITNNNNNINNNSNNNNNNKNNINNNNNNNNNNNNNNNNLNNLNN) are a coiled coil. A compositionally biased stretch (low complexity) spans 1362–1405 (NNNNNINNNSNNNNNNKNNINNNNNNNNNNNNNNNNLNNLNNFN). A run of 2 helical transmembrane segments spans residues 1462 to 1482 (FIKLFFDINYLYFFCDNMFCL) and 1997 to 2017 (KNIFFIMKFCQFLIEIFKLIY). The tract at residues 2691 to 2739 (HRRKMNRQNIRTDSSNNNNNNNINSNNNNNNNNNNNNNNNNNNNNNIYN) is disordered. The segment covering 2704-2739 (SSNNNNNNNINSNNNNNNNNNNNNNNNNNNNNNIYN) has biased composition (low complexity). The next 5 helical transmembrane spans lie at 2860–2880 (INLNEFMYFLFNIYLNICTLT), 2905–2925 (IMSSLWFLYILFIIENNHIYV), 3017–3037 (YSEIAAINALSFLLMCFYHTV), 3200–3220 (ILILICIIIIKNDENEIYIII), and 3276–3296 (IIINILIKRNVSFINFYSWIF). The tract at residues 3620–3646 (LKNEKSTRTYNSSLQEGSDYDEEEDEE) is disordered. A compositionally biased stretch (acidic residues) spans 3637–3646 (SDYDEEEDEE). Positions 3897–3925 (KEETIILLKELNSVENDINDLFLEVDLNE) form a coiled coil.

Belongs to the DOP1 family.

The protein localises to the membrane. May be involved in protein traffic between late Golgi and early endosomes. This Plasmodium falciparum (isolate 3D7) protein is Protein DOP1 homolog PFC0245c.